The sequence spans 789 residues: Mitochondrial inner membrane m-AAA protease component AFG3L1 (789 aa).

Residues 1–70 (MLLRLVGAAG…KLTSFSPRLY (70 aa)) constitute a mitochondrion transit peptide. Residues 81-121 (FKNKKNRKSASPGNSVPPKKEPKNAGPGGDGGNRGGKGDDF) form a disordered region. The span at 106–115 (GPGGDGGNRG) shows a compositional bias: gly residues. 2 consecutive transmembrane segments (helical) span residues 139–158 (FRSLAVLGAGVAAGFLYFYF) and 246–264 (FLRSLVPTLVLVSILLYAM). Positions 302, 303, 344, 345, 346, 347, 348, and 482 each coordinate ATP. A Zn(2+)-binding site is contributed by histidine 566. Residue glutamate 567 is part of the active site. Zn(2+)-binding residues include histidine 570 and aspartate 641. The interval 749 to 789 (EEFVEGTGSLEEDTSLPEGLKDWNKGREEGGTERGLQESPV) is disordered. A compositionally biased stretch (basic and acidic residues) spans 767–789 (GLKDWNKGREEGGTERGLQESPV).

The protein in the N-terminal section; belongs to the AAA ATPase family. In the C-terminal section; belongs to the peptidase M41 family. In terms of assembly, homooligomer. Forms heterohexamers with Spg7 and Afg3l1. The m-AAA protease is either composed of homohexamers of Afg3l2 or heterohexamers of Afg3l1, Afg3l2 and/or Spg7. The cofactor is Zn(2+).

The protein localises to the mitochondrion inner membrane. It catalyses the reaction ATP + H2O = ADP + phosphate + H(+). In terms of biological role, catalytic component of the m-AAA protease, a protease that plays a key role in proteostasis of inner mitochondrial membrane proteins, and which is essential for axonal and neuron development. Afg3l1 possesses both ATPase and protease activities: the ATPase activity is required to unfold substrates, threading them into the internal proteolytic cavity for hydrolysis into small peptide fragments. The m-AAA protease exerts a dual role in the mitochondrial inner membrane: it mediates the processing of specific regulatory proteins and ensures protein quality control by degrading misfolded polypeptides. Required for SPG7 maturation into its active mature form after SPG7 cleavage by mitochondrial-processing peptidase (MPP). This is Mitochondrial inner membrane m-AAA protease component AFG3L1 from Mus musculus (Mouse).